A 291-amino-acid chain; its full sequence is 4-hydroxy-tetrahydrodipicolinate synthase (291 aa).

Thr-44 serves as a coordination point for pyruvate. The active-site Proton donor/acceptor is Tyr-132. The active-site Schiff-base intermediate with substrate is Lys-160. Residue Ile-202 participates in pyruvate binding.

Belongs to the DapA family. In terms of assembly, homotetramer; dimer of dimers.

It localises to the cytoplasm. It catalyses the reaction L-aspartate 4-semialdehyde + pyruvate = (2S,4S)-4-hydroxy-2,3,4,5-tetrahydrodipicolinate + H2O + H(+). It functions in the pathway amino-acid biosynthesis; L-lysine biosynthesis via DAP pathway; (S)-tetrahydrodipicolinate from L-aspartate: step 3/4. Functionally, catalyzes the condensation of (S)-aspartate-beta-semialdehyde [(S)-ASA] and pyruvate to 4-hydroxy-tetrahydrodipicolinate (HTPA). The polypeptide is 4-hydroxy-tetrahydrodipicolinate synthase (Sphingopyxis alaskensis (strain DSM 13593 / LMG 18877 / RB2256) (Sphingomonas alaskensis)).